The primary structure comprises 392 residues: Phospho-N-acetylmuramoyl-pentapeptide-transferase (392 aa).

The next 10 helical transmembrane spans lie at 28-48 (RALM…PFVI), 76-96 (TMGG…WFDL), 100-120 (FVWI…VDDW), 137-157 (YLWQ…SISE), 193-213 (ISYP…IVGS), 225-245 (GLAI…AYVT), 262-282 (SGEL…FLWF), 289-309 (VFMG…IAVI), 314-334 (IVLA…MLQV), and 369-389 (QVVV…LSTL).

The protein belongs to the glycosyltransferase 4 family. MraY subfamily. Mg(2+) is required as a cofactor.

The protein localises to the cell inner membrane. It carries out the reaction UDP-N-acetyl-alpha-D-muramoyl-L-alanyl-gamma-D-glutamyl-meso-2,6-diaminopimeloyl-D-alanyl-D-alanine + di-trans,octa-cis-undecaprenyl phosphate = di-trans,octa-cis-undecaprenyl diphospho-N-acetyl-alpha-D-muramoyl-L-alanyl-D-glutamyl-meso-2,6-diaminopimeloyl-D-alanyl-D-alanine + UMP. The protein operates within cell wall biogenesis; peptidoglycan biosynthesis. Functionally, catalyzes the initial step of the lipid cycle reactions in the biosynthesis of the cell wall peptidoglycan: transfers peptidoglycan precursor phospho-MurNAc-pentapeptide from UDP-MurNAc-pentapeptide onto the lipid carrier undecaprenyl phosphate, yielding undecaprenyl-pyrophosphoryl-MurNAc-pentapeptide, known as lipid I. This Polaromonas naphthalenivorans (strain CJ2) protein is Phospho-N-acetylmuramoyl-pentapeptide-transferase.